We begin with the raw amino-acid sequence, 229 residues long: Auxin-responsive protein IAA17 (229 aa).

The short motif at 14-18 (LCLGL) is the EAR-like (transcriptional repression) element. One can recognise a PB1 domain in the interval 110–211 (AAFVKVSMDG…TCKRLRLMKG (102 aa)).

It belongs to the Aux/IAA family. Homodimers and heterodimers. Interacts with the auxin response factors ARF1 and IAA24. Interacts with IAA1. Interacts with TPL. Interacts (via PB1 domain) with ARF7 (via PB1 domain). In terms of processing, phosphorylated by phytochrome A in vitro.

It localises to the nucleus. In terms of biological role, aux/IAA proteins are short-lived transcriptional factors that function as repressors of early auxin response genes at low auxin concentrations. Repression is thought to result from the interaction with auxin response factors (ARFs), proteins that bind to the auxin-responsive promoter element (AuxRE). Formation of heterodimers with ARF proteins may alter their ability to modulate early auxin response genes expression. This Arabidopsis thaliana (Mouse-ear cress) protein is Auxin-responsive protein IAA17 (IAA17).